The sequence spans 520 residues: Maturase K (520 aa).

It belongs to the intron maturase 2 family. MatK subfamily.

The protein localises to the plastid. It localises to the chloroplast. Usually encoded in the trnK tRNA gene intron. Probably assists in splicing its own and other chloroplast group II introns. The chain is Maturase K from Beaucarnea recurvata (Elephant-foot tree).